The chain runs to 159 residues: Ribosomal RNA large subunit methyltransferase H (159 aa).

S-adenosyl-L-methionine contacts are provided by residues Leu-76, Gly-108, and 127–132 (FGLLTL).

Belongs to the RNA methyltransferase RlmH family. As to quaternary structure, homodimer.

The protein resides in the cytoplasm. The enzyme catalyses pseudouridine(1915) in 23S rRNA + S-adenosyl-L-methionine = N(3)-methylpseudouridine(1915) in 23S rRNA + S-adenosyl-L-homocysteine + H(+). Specifically methylates the pseudouridine at position 1915 (m3Psi1915) in 23S rRNA. The sequence is that of Ribosomal RNA large subunit methyltransferase H from Streptococcus pyogenes serotype M5 (strain Manfredo).